We begin with the raw amino-acid sequence, 667 residues long: DNA ligase (667 aa).

Residues 32–36, 81–82, and E111 each bind NAD(+); these read DSVYD and SL. K113 (N6-AMP-lysine intermediate) is an active-site residue. Positions 134, 168, 285, and 309 each coordinate NAD(+). 4 residues coordinate Zn(2+): C403, C406, C421, and C426. The region spanning 588-667 is the BRCT domain; sequence VGDNPFAGKT…DNLIEQLNLI (80 aa).

Belongs to the NAD-dependent DNA ligase family. LigA subfamily. The cofactor is Mg(2+). Mn(2+) serves as cofactor.

It carries out the reaction NAD(+) + (deoxyribonucleotide)n-3'-hydroxyl + 5'-phospho-(deoxyribonucleotide)m = (deoxyribonucleotide)n+m + AMP + beta-nicotinamide D-nucleotide.. In terms of biological role, DNA ligase that catalyzes the formation of phosphodiester linkages between 5'-phosphoryl and 3'-hydroxyl groups in double-stranded DNA using NAD as a coenzyme and as the energy source for the reaction. It is essential for DNA replication and repair of damaged DNA. The polypeptide is DNA ligase (Lysinibacillus sphaericus (strain C3-41)).